We begin with the raw amino-acid sequence, 299 residues long: Oxygen-dependent coproporphyrinogen-III oxidase (299 aa).

Serine 92 contacts substrate. A divalent metal cation is bound by residues histidine 96 and histidine 106. Histidine 106 acts as the Proton donor in catalysis. A substrate-binding site is contributed by 108–110 (NVR). A divalent metal cation contacts are provided by histidine 145 and histidine 175. An important for dimerization region spans residues 239-274 (YVEFNLVYDRGTLFGLQSGGRAESILMSLPPQVRWE). 257–259 (GGR) provides a ligand contact to substrate.

Belongs to the aerobic coproporphyrinogen-III oxidase family. In terms of assembly, homodimer. It depends on a divalent metal cation as a cofactor.

The protein localises to the cytoplasm. It carries out the reaction coproporphyrinogen III + O2 + 2 H(+) = protoporphyrinogen IX + 2 CO2 + 2 H2O. Its pathway is porphyrin-containing compound metabolism; protoporphyrin-IX biosynthesis; protoporphyrinogen-IX from coproporphyrinogen-III (O2 route): step 1/1. Functionally, involved in the heme biosynthesis. Catalyzes the aerobic oxidative decarboxylation of propionate groups of rings A and B of coproporphyrinogen-III to yield the vinyl groups in protoporphyrinogen-IX. The chain is Oxygen-dependent coproporphyrinogen-III oxidase from Xanthomonas campestris pv. campestris (strain B100).